A 113-amino-acid polypeptide reads, in one-letter code: U11-theraphotoxin-Hhn1a (113 aa).

Positions 1 to 21 are cleaved as a signal peptide; it reads MNTVRVTFLLVFVLAVSLGQA. Positions 22–74 are excised as a propeptide; that stretch reads DKDENRMEMQEKTEQGKSYLDFAENLLLQKLEELEAKPLEEDSEESRNSRQKR. The span at 57–69 shows a compositional bias: basic and acidic residues; that stretch reads AKPLEEDSEESRN. Residues 57 to 83 are disordered; it reads AKPLEEDSEESRNSRQKRCIGEGVPCD. Disulfide bonds link Cys75–Cys90, Cys82–Cys95, and Cys89–Cys110.

It belongs to the neurotoxin 14 (magi-1) family. 01 (HNTX-16) subfamily. As to expression, expressed by the venom gland.

It is found in the secreted. Its function is as follows. Probable ion channel inhibitor. The sequence is that of U11-theraphotoxin-Hhn1a from Cyriopagopus hainanus (Chinese bird spider).